We begin with the raw amino-acid sequence, 311 residues long: MKITAKAWAKTNLHLGVGPAHDDGFHELMTVFQTIDLFDTVTLTTLDEELVEEGSVVKQLSVTGARGVPEDASNLAWRAVDALVKRRAEKTPLSAVSLHISKGIPVAGGMAGGSADAAATLRAVDAWIGPFGEDTLLEVAAELGSDVPFCLLGGTMRGTGRGEQLVDMLTRGKLHWVVAAMAHGLSTPEVFKKHDELNPESHMDISDLSAALLTGNTAEVGQWLHNDLTSAALSLRPELRSVLQEGIRSGAHAGIVSGSGPTTVFLCESEHKAQDVKEALIDAGQVYAAYTATGPAASTADQRGAHILTVS.

The active site involves K10. P105–A115 serves as a coordination point for ATP. D146 is a catalytic residue.

This sequence belongs to the GHMP kinase family. IspE subfamily.

The enzyme catalyses 4-CDP-2-C-methyl-D-erythritol + ATP = 4-CDP-2-C-methyl-D-erythritol 2-phosphate + ADP + H(+). Its pathway is isoprenoid biosynthesis; isopentenyl diphosphate biosynthesis via DXP pathway; isopentenyl diphosphate from 1-deoxy-D-xylulose 5-phosphate: step 3/6. In terms of biological role, catalyzes the phosphorylation of the position 2 hydroxy group of 4-diphosphocytidyl-2C-methyl-D-erythritol. The chain is 4-diphosphocytidyl-2-C-methyl-D-erythritol kinase from Corynebacterium glutamicum (strain ATCC 13032 / DSM 20300 / JCM 1318 / BCRC 11384 / CCUG 27702 / LMG 3730 / NBRC 12168 / NCIMB 10025 / NRRL B-2784 / 534).